We begin with the raw amino-acid sequence, 329 residues long: Malate dehydrogenase (329 aa).

12–18 (GAAGQIG) contributes to the NAD(+) binding site. Substrate is bound by residues Arg95 and Arg101. NAD(+)-binding positions include Asn108, Gln115, and 132–134 (VGN). 2 residues coordinate substrate: Asn134 and Arg165. His190 acts as the Proton acceptor in catalysis.

Belongs to the LDH/MDH superfamily. MDH type 2 family. As to quaternary structure, homodimer.

It catalyses the reaction (S)-malate + NAD(+) = oxaloacetate + NADH + H(+). With respect to regulation, substrate inhibition is observed at high concentrations of oxaloacetate. Functionally, catalyzes the reversible oxidation of malate to oxaloacetate. Catalyzes the reduction of oxaloacetate more efficiently than the oxidation of malate. In Syntrophobacter fumaroxidans (strain DSM 10017 / MPOB), this protein is Malate dehydrogenase.